Here is a 330-residue protein sequence, read N- to C-terminus: D-alanine--D-alanine ligase (330 aa).

Residues 120-326 (KLWLSALDIP…FKQFLEGIIR (207 aa)) form the ATP-grasp domain. Residue 150-205 (AFRNWGAVFVKAASQGSSVGCYKVTDAAKLSEAVNAAFGYSDQVLVEKAVRPRELE) coordinates ATP. The Mg(2+) site is built by Asp-280, Glu-293, and Asn-295.

This sequence belongs to the D-alanine--D-alanine ligase family. Mg(2+) is required as a cofactor. Requires Mn(2+) as cofactor.

It is found in the cytoplasm. The enzyme catalyses 2 D-alanine + ATP = D-alanyl-D-alanine + ADP + phosphate + H(+). The protein operates within cell wall biogenesis; peptidoglycan biosynthesis. In terms of biological role, cell wall formation. This is D-alanine--D-alanine ligase from Tolumonas auensis (strain DSM 9187 / NBRC 110442 / TA 4).